The primary structure comprises 898 residues: MSETDHIASTSSDKNVGKTPELKEDSCNLFSGNESSKLENESKLLSLNTDKTLCQPNEHNNRIEAQENYIPDHGGGEDSCAKTDTGSENSEQIANFPSGNFAKHISKTNETEQKVTQILVELRSSTFPESANEKTYSESPYDTDCTKKFISKIKSVSASEDLLEEIESELLSTEFAEHRVPNGMNKGEHALVLFEKCVQDKYLQQEHIIKKLIKENKKHQELFVDICSEKDNLREELKKRTETEKQHMNTIKQLESRIEELNKEVKASRDQLIAQDVTAKNAVQQLHKEMAQRMEQANKKCEEARQEKEAMVMKYVRGEKESLDLRKEKETLEKKLRDANKELEKNTNKIKQLSQEKGRLHQLYETKEGETTRLIREIDKLKEDINSHVIKVKWAQNKLKAEMDSHKETKDKLKETTTKLTQAKEEADQIRKNCQDMIKTYQESEEIKSNELDAKLRVTKGELEKQMQEKSDQLEMHHAKIKELEDLKRTFKEGMDELRTLRTKVKCLEDERLRTEDELSKYKEIINRQKAEIQNLLDKVKTADQLQEQLQRGKQEIENLKEEVESLNSLINDLQKDIEGSRKRESELLLFTERLTSKNAQLQSESNSLQSQFDKVSCSESQLQSQCEQMKQTNINLESRLLKEEELRKEEVQTLQAELACRQTEVKALSTQVEELKDELVTQRRKHASSIKDLTKQLQQARRKLDQVESGSYDKEVSSMGSRSSSSGSLNARSSAEDRSPENTGSSVAVDNFPQVDKAMLIERIVRLQKAHARKNEKIEFMEDHIKQLVEEIRKKTKIIQSYILREESGTLSSEASDFNKVHLSRRGGIMASLYTSHPADNGLTLELSLEINRKLQAVLEDTLLKNITLKENLQTLGTEIERLIKHQHELEQRTKKT.

Disordered stretches follow at residues 1–43, 68–95, and 702–749; these read MSET…NESK, NYIP…QIAN, and RRKL…SSVA. Ser2 bears the N-acetylserine mark. Positions 82 to 95 are enriched in polar residues; that stretch reads KTDTGSENSEQIAN. Residues 201–712 are a coiled coil; the sequence is KYLQQEHIIK…RKLDQVESGS (512 aa). Positions 703–717 are enriched in basic and acidic residues; that stretch reads RKLDQVESGSYDKEV. Positions 718–734 are enriched in low complexity; that stretch reads SSMGSRSSSSGSLNARS. Ser740 is modified (phosphoserine). 2 coiled-coil regions span residues 759 to 803 and 855 to 894; these read AMLI…IQSY and KLQA…LEQR.

This is Coiled-coil domain-containing protein 186 (CCDC186) from Homo sapiens (Human).